We begin with the raw amino-acid sequence, 664 residues long: Prelamin-A/C (664 aa).

Met-1 is modified (N-acetylmethionine). The disordered stretch occupies residues 1-25; it reads METPSQRRATRSGAQASSTPLSPTR. The segment at 1-33 is head; the sequence is METPSQRRATRSGAQASSTPLSPTRITRLQEKE. Positions 1–130 are interaction with MLIP; sequence METPSQRRAT…TKKEGDLIAA (130 aa). Position 3 is a phosphothreonine (Thr-3). Position 5 is a phosphoserine (Ser-5). Residue Thr-10 is modified to Phosphothreonine. 2 positions are modified to phosphoserine: Ser-12 and Ser-18. Thr-19 carries the post-translational modification Phosphothreonine. Ser-22 carries the phosphoserine; by CDK1 modification. In terms of domain architecture, IF rod spans 31 to 387; the sequence is EKEDLQELND…KLLEGEEERL (357 aa). An N6-acetyllysine; alternate modification is found at Lys-32. Position 32 is an N6-succinyllysine; alternate (Lys-32). Lys-32 is covalently cross-linked (Glycyl lysine isopeptide (Lys-Gly) (interchain with G-Cter in SUMO2); alternate). The coil 1A stretch occupies residues 34-70; that stretch reads DLQELNDRLAVYIDRVRSLETENAGLRLRITESEEVV. Phosphoserine is present on residues Ser-51, Ser-66, and Ser-71. Residues 71–80 form a linker 1 region; that stretch reads SREVSGIKAA. An N6-acetyllysine mark is found at Lys-78 and Lys-97. Residues 81–218 form a coil 1B region; that stretch reads YEAELGDARK…NIYSEELRET (138 aa). Lys-97 is covalently cross-linked (Glycyl lysine isopeptide (Lys-Gly) (interchain with G-Cter in SUMO2)). Ser-107 is modified (phosphoserine). Lys-108, Lys-114, Lys-123, Lys-135, Lys-144, and Lys-155 each carry N6-acetyllysine. An N6-acetyllysine; alternate modification is found at Lys-171. Lys-171 is modified (N6-succinyllysine; alternate). A Glycyl lysine isopeptide (Lys-Gly) (interchain with G-Cter in SUMO2); alternate cross-link involves residue Lys-171. N6-acetyllysine occurs at positions 180, 201, and 208. Lys-201 is covalently cross-linked (Glycyl lysine isopeptide (Lys-Gly) (interchain with G-Cter in SUMO2); alternate). A Glycyl lysine isopeptide (Lys-Gly) (interchain with G-Cter in SUMO); alternate cross-link involves residue Lys-201. Lys-208 participates in a covalent cross-link: Glycyl lysine isopeptide (Lys-Gly) (interchain with G-Cter in SUMO2). Position 212 is a phosphoserine (Ser-212). Residues Lys-219 and Lys-233 each participate in a glycyl lysine isopeptide (Lys-Gly) (interchain with G-Cter in SUMO2) cross-link. The tract at residues 219 to 242 is linker 2; the sequence is KRRHETRLVEIDNGKQREFESRLA. Residues Lys-233, Lys-260, Lys-265, and Lys-270 each carry the N6-acetyllysine modification. Residues 243–383 are coil 2; that stretch reads DALQELRAQH…HAYRKLLEGE (141 aa). Residues 259–331 are necessary and sufficient for the interaction with IFFO1; it reads YKKELEKTYS…DLEDSLARER (73 aa). Residue Lys-260 forms a Glycyl lysine isopeptide (Lys-Gly) (interchain with G-Cter in SUMO2); alternate linkage. Residue Lys-270 forms a Glycyl lysine isopeptide (Lys-Gly) (interchain with G-Cter in SUMO2); alternate linkage. Ser-277 is modified (phosphoserine). Position 282 is a phosphoserine; by ATR (Ser-282). A phosphoserine mark is found at Ser-301 and Ser-307. Residue Lys-311 forms a Glycyl lysine isopeptide (Lys-Gly) (interchain with G-Cter in SUMO2); alternate linkage. Residues Lys-311, Lys-316, and Lys-341 each carry the N6-acetyllysine modification. Residues Lys-366 and Lys-378 each participate in a glycyl lysine isopeptide (Lys-Gly) (interchain with G-Cter in SUMO2) cross-link. Residues 384-442 are disordered; that stretch reads EERLRLSPSPTSQRSRGRASSHSSQTQGGGSVTKKRKLESTESRSSFSQHARTSGRVAV. The interval 384–664 is tail; sequence EERLRLSPSP…TQSPQNCSIM (281 aa). The residue at position 390 (Ser-390) is a Phosphoserine. Residue Ser-392 is modified to Phosphoserine; by CDK1. At Ser-395 the chain carries Phosphoserine; by ATR. 6 positions are modified to phosphoserine: Ser-398, Ser-403, Ser-404, Ser-406, Ser-407, and Ser-414. Thr-416 carries the post-translational modification Phosphothreonine. Lys-417 carries the N6-acetyllysine modification. Glycyl lysine isopeptide (Lys-Gly) (interchain with G-Cter in SUMO2) cross-links involve residues Lys-417 and Lys-420. A Nuclear localization signal motif is present at residues 417–422; the sequence is KKRKLE. Phosphoserine is present on residues Ser-423, Ser-426, Ser-429, and Ser-431. Residues 426-435 are compositionally biased toward polar residues; the sequence is SRSSFSQHAR. The LTD domain occupies 428-545; sequence SSFSQHARTS…EEVAMRKLVR (118 aa). A Glycyl lysine isopeptide (Lys-Gly) (interchain with G-Cter in SUMO2); alternate cross-link involves residue Lys-450. An N6-acetyllysine mark is found at Lys-450 and Lys-457. A phosphoserine mark is found at Ser-458 and Ser-463. Glycyl lysine isopeptide (Lys-Gly) (interchain with G-Cter in SUMO2) cross-links involve residues Lys-470 and Lys-486. The residue at position 486 (Lys-486) is an N6-acetyllysine. Phosphothreonine occurs at positions 496, 505, and 510. Residues Ser-533 and Ser-546 each carry the phosphoserine modification. Thr-548 carries the phosphothreonine modification. The interval 552 to 576 is disordered; that stretch reads DDEDEDGDDLLHHHHGSHCSSSGDP. Ser-568 and Ser-571 each carry phosphoserine. Lys-597 is covalently cross-linked (Glycyl lysine isopeptide (Lys-Gly) (interchain with G-Cter in SUMO2); alternate). A Glycyl lysine isopeptide (Lys-Gly) (interchain with G-Cter in SUMO1); alternate cross-link involves residue Lys-597. Residues 598-619 form a disordered region; the sequence is ASASGSGAQVGGPISSGSSASS. 4 positions are modified to phosphoserine: Ser-612, Ser-613, Ser-616, and Ser-619. O-linked (GlcNAc) serine glycosylation is found at Ser-625 and Ser-628. 4 positions are modified to phosphoserine: Ser-628, Ser-632, Ser-636, and Ser-652. A propeptide spans 647–661 (removed in Lamin-A/C form); it reads LLGNSSPRTQSPQNC. A Cysteine methyl ester modification is found at Cys-661. A lipid anchor (S-farnesyl cysteine) is attached at Cys-661. Positions 662–664 are cleaved as a propeptide — removed in Prelamin-A/C form and in Lamin-A/C form; it reads SIM.

This sequence belongs to the intermediate filament family. As to quaternary structure, homodimer of lamin A and lamin C. Lamin dimers then assemble into dimeric head-to-tail polymers. Ultimately, two head-to-tail polymers assemble laterally into a protofilament with a uniformly shaped rod of 3.5 nm in diameter. Interacts with lamin-associated polypeptides IA, IB and TMPO-alpha, RB1 and with emerin. Interacts with SREBF1, SREBF2, SUN2 and TMEM43. Interacts with TMEM201. Proteolytically processed isoform A interacts with NARF. Interacts with SUN1. Interacts with MLIP. Interacts with DMPK; may regulate nuclear envelope stability. Interacts with SUV39H1; the interaction increases stability of SUV39H1. Interacts with SYNE2. Interacts with ITSN1 isoform 2. Interacts with IFFO1; enables the formation of an interior nucleoskeleton that is recruited to DNA double-strand breaks. In terms of assembly, interacts with EMD. Interacts (via C-terminus) with LEMD2 (via N-terminus) (in vitro). In terms of processing, proteolytic cleavage of the C-terminal of 18 residues of prelamin-A/C results in the production of lamin-A/C. The prelamin-A/C maturation pathway includes farnesylation of CAAX motif by protein farnesyltransferase (FNTA and FNTB), removal of the last three amino acids (-AAX) by RCE1/FACE2 and/or ZMPSTE24, methylation of the C-terminal cysteine by ICMT and endoproteolytic removal of the last 15 C-terminal amino acids by ZMPSTE24. Proteolytic cleavage requires prior farnesylation and methylation, and absence of these blocks cleavage. Farnesylation of prelamin-A/C facilitates nuclear envelope targeting. Post-translationally, phosphorylation plays a key role in lamin organization, subcellular localization and nuclear envelope disintegration. Phosphorylation by CDK1 at Ser-22 and Ser-392 at the onset of mitosis drives lamin disassembly and nuclear envelope breakdown. Phosphorylation at Ser-22 and Ser-392 during interphase promotes localization to the nucleoplasm and regulates lamina assembly. Phosphorylation at Ser-22, Ser-392 and Ser-628 during interphase causes redistribution between the nucleus and the cytoplasm. Phosphorylation at Ser-22 by CDK1 regulates matrix stiffness. Phosphorylation status of Ser-22 determines its localization between double-strand break (DSB) sites and the nuclear matrix. Phosphorylated by ATR at Ser-282 in response to DNA damage, leading to lamin disassembly and nuclear envelope rupture. Phosphorylation also regulates stability in micronuclei arising from genome instability: phosphorylation at Ser-395 by ATR in response to genome instability and double-stranded DNA breaks primes LMNA for subsequent phosphorylation at Ser-392 by CDK1 and micronuclei envelope rupture. The rupture of micronuclear envelope triggers the cGAS-STING pathway thereby activating the type I interferon response and innate immunity. In terms of processing, acetylation by KAT8 is required for nuclear architecture. Sumoylation is necessary for the localization to the nuclear envelope. In terms of tissue distribution, in the arteries, prelamin-A/C accumulation is not observed in young healthy vessels but is prevalent in medial vascular smooth muscle cells (VSMCs) from aged individuals and in atherosclerotic lesions, where it often colocalizes with senescent and degenerate VSMCs. Prelamin-A/C expression increases with age and disease. In normal aging, the accumulation of prelamin-A/C is caused in part by the down-regulation of ZMPSTE24/FACE1 in response to oxidative stress.

It is found in the nucleus lamina. The protein resides in the nucleus envelope. The protein localises to the nucleus. Its subcellular location is the nucleoplasm. It localises to the nucleus matrix. It is found in the nucleus speckle. Its function is as follows. Lamins are intermediate filament proteins that assemble into a filamentous meshwork, and which constitute the major components of the nuclear lamina, a fibrous layer on the nucleoplasmic side of the inner nuclear membrane. Lamins provide a framework for the nuclear envelope, bridging the nuclear envelope and chromatin, thereby playing an important role in nuclear assembly, chromatin organization, nuclear membrane and telomere dynamics. Lamin A and C also regulate matrix stiffness by conferring nuclear mechanical properties. The structural integrity of the lamina is strictly controlled by the cell cycle, as seen by the disintegration and formation of the nuclear envelope in prophase and telophase, respectively. Lamin A and C are present in equal amounts in the lamina of mammals. Also invoved in DNA repair: recruited by DNA repair proteins XRCC4 and IFFO1 to the DNA double-strand breaks (DSBs) to prevent chromosome translocation by immobilizing broken DNA ends. Required for normal development of peripheral nervous system and skeletal muscle and for muscle satellite cell proliferation. Required for osteoblastogenesis and bone formation. Also prevents fat infiltration of muscle and bone marrow, helping to maintain the volume and strength of skeletal muscle and bone. Required for cardiac homeostasis. Prelamin-A/C can accelerate smooth muscle cell senescence. It acts to disrupt mitosis and induce DNA damage in vascular smooth muscle cells (VSMCs), leading to mitotic failure, genomic instability, and premature senescence. The protein is Prelamin-A/C (LMNA) of Homo sapiens (Human).